An 807-amino-acid polypeptide reads, in one-letter code: Glycerol-3-phosphate acyltransferase (807 aa).

The short motif at 308 to 313 is the HXXXXD motif element; the sequence is CHRSHM.

This sequence belongs to the GPAT/DAPAT family.

The protein resides in the cell inner membrane. It catalyses the reaction sn-glycerol 3-phosphate + an acyl-CoA = a 1-acyl-sn-glycero-3-phosphate + CoA. The protein operates within phospholipid metabolism; CDP-diacylglycerol biosynthesis; CDP-diacylglycerol from sn-glycerol 3-phosphate: step 1/3. The sequence is that of Glycerol-3-phosphate acyltransferase from Shewanella sp. (strain W3-18-1).